Consider the following 675-residue polypeptide: Rho guanine nucleotide exchange factor 37 (675 aa).

Residues 1–26 form a disordered region; it reads MAKHGADEPSSRSGSPDREGRASEDR. One can recognise a DH domain in the interval 30 to 213; the sequence is HQRLAVRELI…QDVNTNINEY (184 aa). The region spanning 254-455 is the BAR domain; it reads LKQEAGLIPR…LPHHHVPEPA (202 aa). 2 consecutive SH3 domains span residues 506–569 and 602–665; these read GPGK…LYHV and PTMN…RARS.

In terms of biological role, may act as a guanine nucleotide exchange factor (GEF). This chain is Rho guanine nucleotide exchange factor 37 (ARHGEF37), found in Homo sapiens (Human).